Here is a 126-residue protein sequence, read N- to C-terminus: Nitrogenase-stabilizing/protective protein NifW (126 aa).

The interval 104–126 (VPMSEITVERPATTQTDEKGQQR) is disordered.

Belongs to the NifW family. In terms of assembly, homotrimer; associates with NifD.

Functionally, may protect the nitrogenase Fe-Mo protein from oxidative damage. The polypeptide is Nitrogenase-stabilizing/protective protein NifW (Parafrankia sp. (strain EAN1pec)).